The chain runs to 132 residues: ATP synthase epsilon chain (132 aa).

This sequence belongs to the ATPase epsilon chain family. In terms of assembly, F-type ATPases have 2 components, CF(1) - the catalytic core - and CF(0) - the membrane proton channel. CF(1) has five subunits: alpha(3), beta(3), gamma(1), delta(1), epsilon(1). CF(0) has three main subunits: a, b and c.

Its subcellular location is the cell membrane. Functionally, produces ATP from ADP in the presence of a proton gradient across the membrane. The chain is ATP synthase epsilon chain from Brevibacillus brevis (strain 47 / JCM 6285 / NBRC 100599).